A 192-amino-acid polypeptide reads, in one-letter code: Small ribosomal subunit protein eS7 (192 aa).

It belongs to the eukaryotic ribosomal protein eS7 family.

The polypeptide is Small ribosomal subunit protein eS7 (RpS7) (Culex quinquefasciatus (Southern house mosquito)).